A 198-amino-acid chain; its full sequence is Recombination protein RecR (198 aa).

The segment at 58-73 adopts a C4-type zinc-finger fold; it reads CLNCGNVGTSDICDIC. Residues 81 to 175 form the Toprim domain; the sequence is GELCVVEDVA…RLTSLAQGVP (95 aa).

This sequence belongs to the RecR family.

May play a role in DNA repair. It seems to be involved in an RecBC-independent recombinational process of DNA repair. It may act with RecF and RecO. This is Recombination protein RecR from Ruegeria pomeroyi (strain ATCC 700808 / DSM 15171 / DSS-3) (Silicibacter pomeroyi).